A 557-amino-acid polypeptide reads, in one-letter code: Venom carboxylesterase-6 (557 aa).

The first 21 residues, 1–21 (MYMLKLSYILLFLGFVKFSWQ), serve as a signal peptide directing secretion. Cys-88 and Cys-108 are joined by a disulfide. Residue Asn-145 is glycosylated (N-linked (GlcNAc...) asparagine). Catalysis depends on Ser-212, which acts as the Acyl-ester intermediate. Cys-264 and Cys-275 are oxidised to a cystine. Glu-341 acts as the Charge relay system in catalysis. A glycan (N-linked (GlcNAc...) asparagine) is linked at Asn-374. The Charge relay system role is filled by His-464. Residues Asn-478, Asn-528, and Asn-542 are each glycosylated (N-linked (GlcNAc...) asparagine).

The protein belongs to the type-B carboxylesterase/lipase family. In terms of tissue distribution, expressed by the venom gland.

It is found in the secreted. The catalysed reaction is a carboxylic ester + H2O = an alcohol + a carboxylate + H(+). The protein is Venom carboxylesterase-6 of Apis mellifera (Honeybee).